The following is a 397-amino-acid chain: Teichoic acid D-alanine hydrolase (397 aa).

A signal peptide spans 1 to 23 (MKFNKVKLVIHACVLLFIIISIA).

The protein localises to the cell membrane. It carries out the reaction [(4-D-Ala)-(2-GlcNAc)-Rib-ol-P]n-[Gro-P]m-beta-D-ManNAc-(1-&gt;4)-alpha-D-GlcNAc-P-peptidoglycan + n H2O = [(2-GlcNAc)-Rib-ol-P]n-[Gro-P]m-beta-D-ManNAc-(1-&gt;4)-alpha-D-GlcNAc-P-peptidoglycan + n D-alanine.. Functionally, catalyzes the liberation of D-alanyl moieties present on wall teichoic acid (WTA) and lipoteichoic acid (LTA). Affects the methicillin resistance level and autolysis in the presence of Triton X-100 as well as the cell wall structure. The protein is Teichoic acid D-alanine hydrolase (fmtA) of Staphylococcus aureus (strain Mu50 / ATCC 700699).